We begin with the raw amino-acid sequence, 514 residues long: Developmental and secondary metabolism regulator veA (514 aa).

In terms of domain architecture, Velvet spans 26-218; that stretch reads NRHLWYQLTV…ADQGCHVRIR (193 aa). Positions 40–45 match the Nuclear localization signal motif; that stretch reads ERARAC. The tract at residues 219–463 is disordered; the sequence is RDVRMRKRDA…PIGSKRKHDQ (245 aa). The span at 228–243 shows a compositional bias: basic and acidic residues; that stretch reads AKSNNGRDRREDDMAR. The segment covering 256–267 has biased composition (low complexity); sequence SAAARARSMSNS. A compositionally biased stretch (polar residues) spans 386–396; it reads SYPSTPVSSHP. Positions 411 to 448 are PEST; the sequence is KSPSNSVSPSNSSLKITDLLVQPLPSSEPKLEVGSAPC. The span at 412 to 423 shows a compositional bias: low complexity; it reads SPSNSVSPSNSS.

The protein belongs to the velvet family. VeA subfamily. As to quaternary structure, component of the heterotrimeric velvet complex composed of laeA, veA and velB; VeA acting as a bridging protein between laeA and velB.

It is found in the nucleus. The protein localises to the cytoplasm. Its function is as follows. Component of the velvet transcription factor complex that controls sexual/asexual developmental ratio in response to light, promoting sexual development in the darkness while stimulating asexual sporulation under illumination. The velvet complex hat acts as a global regulator for secondary metabolite gene expression. Controls the expression of the cephalosporin C gene cluster. Regulates hyphal fragmentation. The sequence is that of Developmental and secondary metabolism regulator veA from Hapsidospora chrysogenum (strain ATCC 11550 / CBS 779.69 / DSM 880 / IAM 14645 / JCM 23072 / IMI 49137) (Acremonium chrysogenum).